The following is an 84-amino-acid chain: MNKDDIIKEFQIHDTDTGSTAVQIALLTARIRHLTEHLKNHPKDFHSRRGLMKMVGRRRKMLKYLMKKDPELYKQLLEKLSLRK.

It belongs to the universal ribosomal protein uS15 family. As to quaternary structure, part of the 30S ribosomal subunit. Forms a bridge to the 50S subunit in the 70S ribosome, contacting the 23S rRNA.

Functionally, one of the primary rRNA binding proteins, it binds directly to 16S rRNA where it helps nucleate assembly of the platform of the 30S subunit by binding and bridging several RNA helices of the 16S rRNA. Forms an intersubunit bridge (bridge B4) with the 23S rRNA of the 50S subunit in the ribosome. In Fervidobacterium nodosum (strain ATCC 35602 / DSM 5306 / Rt17-B1), this protein is Small ribosomal subunit protein uS15.